The chain runs to 303 residues: Recombination-associated protein RdgC (303 aa).

The protein belongs to the RdgC family.

It is found in the cytoplasm. Its subcellular location is the nucleoid. Functionally, may be involved in recombination. The polypeptide is Recombination-associated protein RdgC (Yersinia pseudotuberculosis serotype O:1b (strain IP 31758)).